The primary structure comprises 141 residues: VLSSKDKTNVKTAFGKIGGHAAEYGAEALERMFLGFPTTKTYFPHFDLSHGSAQVKAHGKKVGDALTKAADHLDDLPSALSALSDLHAHKLRVDPVNFKLLSHCLLVTVAAHHPGDFTPSVHASLDKFLANVSTVLTSKYR.

Residues 1–141 (VLSSKDKTNV…VSTVLTSKYR (141 aa)) enclose the Globin domain. Residue S3 is modified to Phosphoserine. The residue at position 7 (K7) is an N6-succinyllysine. The residue at position 8 (T8) is a Phosphothreonine. N6-succinyllysine is present on K11. At K16 the chain carries N6-acetyllysine; alternate. An N6-succinyllysine; alternate modification is found at K16. Phosphotyrosine is present on Y24. K40 bears the N6-succinyllysine mark. S49 is subject to Phosphoserine. H58 contributes to the O2 binding site. Residue H87 participates in heme b binding. S102 bears the Phosphoserine mark. T108 is modified (phosphothreonine). Position 124 is a phosphoserine (S124). Residues T134 and T137 each carry the phosphothreonine modification. S138 carries the post-translational modification Phosphoserine.

This sequence belongs to the globin family. As to quaternary structure, heterotetramer of two alpha chains and two beta chains. In terms of tissue distribution, red blood cells.

Functionally, involved in oxygen transport from the lung to the various peripheral tissues. In terms of biological role, hemopressin acts as an antagonist peptide of the cannabinoid receptor CNR1. Hemopressin-binding efficiently blocks cannabinoid receptor CNR1 and subsequent signaling. The sequence is that of Hemoglobin subunit alpha (HBA) from Camelus dromedarius (Dromedary).